Consider the following 286-residue polypeptide: Shikimate dehydrogenase (NADP(+)) (286 aa).

Shikimate is bound by residues 20 to 22 (SLS) and serine 67. Residue lysine 71 is the Proton acceptor of the active site. Shikimate contacts are provided by asparagine 92 and aspartate 107. NADP(+) contacts are provided by residues 131–135 (GGGGA) and alanine 230. Tyrosine 232 contributes to the shikimate binding site. Glycine 253 is a binding site for NADP(+).

It belongs to the shikimate dehydrogenase family. In terms of assembly, homodimer.

The catalysed reaction is shikimate + NADP(+) = 3-dehydroshikimate + NADPH + H(+). The protein operates within metabolic intermediate biosynthesis; chorismate biosynthesis; chorismate from D-erythrose 4-phosphate and phosphoenolpyruvate: step 4/7. Functionally, involved in the biosynthesis of the chorismate, which leads to the biosynthesis of aromatic amino acids. Catalyzes the reversible NADPH linked reduction of 3-dehydroshikimate (DHSA) to yield shikimate (SA). The protein is Shikimate dehydrogenase (NADP(+)) of Lactococcus lactis subsp. lactis (strain IL1403) (Streptococcus lactis).